The sequence spans 382 residues: Cell division cycle-associated protein 7 (382 aa).

Disordered stretches follow at residues 68 to 118 and 151 to 217; these read PLRV…EDGM and GRHS…EDKY. A compositionally biased stretch (acidic residues) spans 105–117; the sequence is SEEEEEEEEEEDG. The tract at residues 152–177 is interaction with MYC; that stretch reads RHSLPGHRAKDSKSPRRRTFPGVATR. The Nuclear localization signal signature appears at 167 to 183; sequence RRRTFPGVATRRNPERR. The residue at position 170 (T170) is a Phosphothreonine. Phosphoserine is present on S197. A Phosphothreonine modification is found at T203. Residues 203–215 are compositionally biased toward acidic residues; that stretch reads TEEEEEEEEEEED. K216 participates in a covalent cross-link: Glycyl lysine isopeptide (Lys-Gly) (interchain with G-Cter in SUMO2). Residue S225 is modified to Phosphoserine. Residues 258 to 382 form a mediates transcriptional activity region; the sequence is EEEIRNICSN…SLKQEFEMQA (125 aa).

In terms of assembly, interacts with MYC (via C-terminus), YWHAE and YWHAZ. In terms of processing, phosphorylation at Thr-170 promotes interaction with YWHAE and YWHAZ, dissociation from MYC and sequestration in the cytoplasm.

It is found in the nucleus. Its subcellular location is the cytoplasm. Functionally, participates in MYC-mediated cell transformation and apoptosis; induces anchorage-independent growth and clonogenicity in lymphoblastoid cells. Insufficient to induce tumorigenicity when overexpressed but contributes to MYC-mediated tumorigenesis. May play a role as transcriptional regulator. The protein is Cell division cycle-associated protein 7 (Cdca7) of Mus musculus (Mouse).